We begin with the raw amino-acid sequence, 290 residues long: MSEKKEIKNKINCISNTKKITKAMEMVSIAKMKKSEIKMKSRKPYLDIIKTIISHILYNHIKYRHLYLNNRKTKKIGIIVISTDRGLCGSLNISLFKKIIQLINIYKNKNVMSSLFILGSKGVSYFKSSTYDITYYEKIITKNYTFFDCLNFIHSSLEYYNTQKIDKLFLSYNQFKNTLVYIPVIMQLLPLSKKIFKGNKNSHWDYIYESNSGILLDTLLNDYIESQIYQSILENCTCEQASRMISMKQATDNSEDLIKKLRILYNKARQDNITQELTEIISGANAVSLY.

The protein belongs to the ATPase gamma chain family. As to quaternary structure, F-type ATPases have 2 components, CF(1) - the catalytic core - and CF(0) - the membrane proton channel. CF(1) has five subunits: alpha(3), beta(3), gamma(1), delta(1), epsilon(1). CF(0) has three main subunits: a, b and c.

It is found in the cell membrane. In terms of biological role, produces ATP from ADP in the presence of a proton gradient across the membrane. The gamma chain is believed to be important in regulating ATPase activity and the flow of protons through the CF(0) complex. This Buchnera aphidicola subsp. Schlechtendalia chinensis protein is ATP synthase gamma chain.